The chain runs to 213 residues: Imidazole glycerol phosphate synthase subunit HisH (213 aa).

Residues 4-211 (NLGLIDYGMG…LTWLRNGAEP (208 aa)) form the Glutamine amidotransferase type-1 domain. Cys82 serves as the catalytic Nucleophile. Catalysis depends on residues His186 and Glu188.

As to quaternary structure, heterodimer of HisH and HisF.

Its subcellular location is the cytoplasm. It catalyses the reaction 5-[(5-phospho-1-deoxy-D-ribulos-1-ylimino)methylamino]-1-(5-phospho-beta-D-ribosyl)imidazole-4-carboxamide + L-glutamine = D-erythro-1-(imidazol-4-yl)glycerol 3-phosphate + 5-amino-1-(5-phospho-beta-D-ribosyl)imidazole-4-carboxamide + L-glutamate + H(+). The catalysed reaction is L-glutamine + H2O = L-glutamate + NH4(+). It participates in amino-acid biosynthesis; L-histidine biosynthesis; L-histidine from 5-phospho-alpha-D-ribose 1-diphosphate: step 5/9. Functionally, IGPS catalyzes the conversion of PRFAR and glutamine to IGP, AICAR and glutamate. The HisH subunit catalyzes the hydrolysis of glutamine to glutamate and ammonia as part of the synthesis of IGP and AICAR. The resulting ammonia molecule is channeled to the active site of HisF. This chain is Imidazole glycerol phosphate synthase subunit HisH, found in Synechococcus sp. (strain CC9605).